The following is a 261-amino-acid chain: Cytochrome c oxidase subunit 3 (261 aa).

The Mitochondrial matrix segment spans residues 1–15 (MAHQSHAYHMVKPSP). A helical membrane pass occupies residues 16–34 (WPLTGALSALLTTSGLTMW). The Mitochondrial intermembrane segment spans residues 35–40 (FHFHST). The chain crosses the membrane as a helical span at residues 41-66 (TLLLTGLLTNALTMYQWWRDVVREST). Over 67 to 72 (YQGHHT) the chain is Mitochondrial matrix. A helical membrane pass occupies residues 73–105 (LPVQKGLRYGMILFITSEVFFFAGFFWAFYHSS). The Mitochondrial intermembrane portion of the chain corresponds to 106 to 128 (LAPTPQLGGHWPPTGIIPLNPLE). Residues 129-152 (VPLLNTSVLLASGVSITWAHHSLM) traverse the membrane as a helical segment. The Mitochondrial matrix segment spans residues 153–155 (ENN). A helical membrane pass occupies residues 156–183 (RTQMIQALLITILLGIYFTLLQASEYIE). Residues 184–190 (APFTISD) lie on the Mitochondrial intermembrane side of the membrane. A helical transmembrane segment spans residues 191–223 (GIYGSTFFMATGFHGLHVIIGSTFLTVCLARQL). At 224–232 (LFHFTSKHH) the chain is on the mitochondrial matrix side. Residues 233 to 256 (FGFEAAAWYWHFVDVVWLFLYVSI) form a helical membrane-spanning segment. Residues 257–261 (YWWGS) lie on the Mitochondrial intermembrane side of the membrane.

It belongs to the cytochrome c oxidase subunit 3 family. Component of the cytochrome c oxidase (complex IV, CIV), a multisubunit enzyme composed of 14 subunits. The complex is composed of a catalytic core of 3 subunits MT-CO1, MT-CO2 and MT-CO3, encoded in the mitochondrial DNA, and 11 supernumerary subunits COX4I, COX5A, COX5B, COX6A, COX6B, COX6C, COX7A, COX7B, COX7C, COX8 and NDUFA4, which are encoded in the nuclear genome. The complex exists as a monomer or a dimer and forms supercomplexes (SCs) in the inner mitochondrial membrane with NADH-ubiquinone oxidoreductase (complex I, CI) and ubiquinol-cytochrome c oxidoreductase (cytochrome b-c1 complex, complex III, CIII), resulting in different assemblies (supercomplex SCI(1)III(2)IV(1) and megacomplex MCI(2)III(2)IV(2)).

It localises to the mitochondrion inner membrane. It carries out the reaction 4 Fe(II)-[cytochrome c] + O2 + 8 H(+)(in) = 4 Fe(III)-[cytochrome c] + 2 H2O + 4 H(+)(out). In terms of biological role, component of the cytochrome c oxidase, the last enzyme in the mitochondrial electron transport chain which drives oxidative phosphorylation. The respiratory chain contains 3 multisubunit complexes succinate dehydrogenase (complex II, CII), ubiquinol-cytochrome c oxidoreductase (cytochrome b-c1 complex, complex III, CIII) and cytochrome c oxidase (complex IV, CIV), that cooperate to transfer electrons derived from NADH and succinate to molecular oxygen, creating an electrochemical gradient over the inner membrane that drives transmembrane transport and the ATP synthase. Cytochrome c oxidase is the component of the respiratory chain that catalyzes the reduction of oxygen to water. Electrons originating from reduced cytochrome c in the intermembrane space (IMS) are transferred via the dinuclear copper A center (CU(A)) of subunit 2 and heme A of subunit 1 to the active site in subunit 1, a binuclear center (BNC) formed by heme A3 and copper B (CU(B)). The BNC reduces molecular oxygen to 2 water molecules using 4 electrons from cytochrome c in the IMS and 4 protons from the mitochondrial matrix. The protein is Cytochrome c oxidase subunit 3 (MT-CO3) of Pongo abelii (Sumatran orangutan).